The primary structure comprises 1441 residues: Pleiotropic drug resistance protein TUR2 (1441 aa).

The 273-residue stretch at 158-430 (LSALHLMPSG…FESMGFKCPE (273 aa)) folds into the ABC transporter 1 domain. An ATP-binding site is contributed by 191 to 198 (GPPGAGKT). The ABC transmembrane type-2 1 domain occupies 508–721 (ELLKACIDRE…AQNAIAVNEF (214 aa)). The next 6 membrane-spanning stretches (helical) occupy residues 526–546 (FVYIFKVVQLIVLALIAMTVF), 559–579 (ATIFFGAMFLGLVTHLFNGFA), 614–634 (IPISFVECGVWIAMTYYVIGF), 646–666 (LLLVLISQVASGLFRLLAAVG), 671–691 (VADTFGAFAQLVLLVLGGFII), and 756–776 (IGVGALIGYMVLFNFLFILFL). An ABC transporter 2 domain is found at 843–1095 (ITFDNVKYSV…HLIKYFESID (253 aa)). An ATP-binding site is contributed by 888–895 (GVSGRGKT). The region spanning 1168 to 1382 (MQCLACLWKQ…TLYGLVVSQF (215 aa)) is the ABC transmembrane type-2 2 domain. The next 7 membrane-spanning stretches (helical) occupy residues 1187-1207 (YTATRLFFTVVIALIFGTIFW), 1215-1235 (TSLDLINAMGSMYAAVLFIGI), 1275-1295 (VPHILVQTLLYGLLVYSMIGF), 1302-1322 (FLWYMFFMFFTFLYFTYYGMM), 1332-1352 (IAAIVAAAFYAIWNIFAGFII), 1363-1383 (WYYWACPVAWTLYGLVVSQFG), and 1413-1433 (VVGVMVVVFTVLFASIFAFSI).

This sequence belongs to the ABC transporter superfamily. ABCG family. PDR (TC 3.A.1.205) subfamily. As to expression, ubiquitous.

It localises to the cell membrane. Functionally, may be a general defense protein. Seems involved in turion (dormant buds) formation. Confers resistance to the diterpenoid antifungal agent sclareol. This chain is Pleiotropic drug resistance protein TUR2 (TUR2), found in Spirodela polyrhiza (Giant duckweed).